The following is a 325-amino-acid chain: GMP reductase (325 aa).

Cysteine 173 acts as the Thioimidate intermediate in catalysis. 202 to 225 contributes to the NADP(+) binding site; it reads IIADGGIRSHGDIAKSIRFGATMV.

Belongs to the IMPDH/GMPR family. GuaC type 2 subfamily.

The enzyme catalyses IMP + NH4(+) + NADP(+) = GMP + NADPH + 2 H(+). In terms of biological role, catalyzes the irreversible NADPH-dependent deamination of GMP to IMP. It functions in the conversion of nucleobase, nucleoside and nucleotide derivatives of G to A nucleotides, and in maintaining the intracellular balance of A and G nucleotides. The protein is GMP reductase of Paracidovorax citrulli (strain AAC00-1) (Acidovorax citrulli).